The primary structure comprises 278 residues: 4-deoxy-L-threo-5-hexosulose-uronate ketol-isomerase (278 aa).

Residues His-196, His-198, Glu-203, and His-245 each contribute to the Zn(2+) site.

The protein belongs to the KduI family. Homohexamer. Requires Zn(2+) as cofactor.

It catalyses the reaction 5-dehydro-4-deoxy-D-glucuronate = 3-deoxy-D-glycero-2,5-hexodiulosonate. It functions in the pathway glycan metabolism; pectin degradation; 2-dehydro-3-deoxy-D-gluconate from pectin: step 4/5. Functionally, catalyzes the isomerization of 5-dehydro-4-deoxy-D-glucuronate to 3-deoxy-D-glycero-2,5-hexodiulosonate. This is 4-deoxy-L-threo-5-hexosulose-uronate ketol-isomerase from Escherichia coli O8 (strain IAI1).